We begin with the raw amino-acid sequence, 105 residues long: Nucleoid-associated protein Dred_0043 (105 aa).

It belongs to the YbaB/EbfC family. As to quaternary structure, homodimer.

It localises to the cytoplasm. The protein resides in the nucleoid. Binds to DNA and alters its conformation. May be involved in regulation of gene expression, nucleoid organization and DNA protection. The polypeptide is Nucleoid-associated protein Dred_0043 (Desulforamulus reducens (strain ATCC BAA-1160 / DSM 100696 / MI-1) (Desulfotomaculum reducens)).